The sequence spans 181 residues: High mobility group protein B4 (181 aa).

The HMG box 1 DNA-binding region spans 9–79; it reads PKVNVSSYIH…RYQQEMMNYI (71 aa). Over residues 80 to 89 the composition is skewed to basic residues; that stretch reads GKRRKRRKRD. The tract at residues 80-100 is disordered; it reads GKRRKRRKRDPKAPRKPPSSF. The segment at residues 93-161 is a DNA-binding region (HMG box 2); that stretch reads PRKPPSSFLL…KYFEEQEAYR (69 aa).

It belongs to the HMGB family. As to expression, expressed in adult germ cells (at protein level).

It is found in the nucleus. Its subcellular location is the chromosome. This is High mobility group protein B4 (Hmgb4) from Mus musculus (Mouse).